The primary structure comprises 163 residues: Flagellar assembly factor FliW (163 aa).

Over residues Pro136–Glu156 the composition is skewed to basic and acidic residues. Residues Pro136–Gly163 form a disordered region.

Belongs to the FliW family. In terms of assembly, interacts with translational regulator CsrA and flagellin(s).

It is found in the cytoplasm. Acts as an anti-CsrA protein, binds CsrA and prevents it from repressing translation of its target genes, one of which is flagellin. Binds to flagellin and participates in the assembly of the flagellum. This chain is Flagellar assembly factor FliW, found in Geotalea uraniireducens (strain Rf4) (Geobacter uraniireducens).